Reading from the N-terminus, the 323-residue chain is Prostaglandin-E(2) 9-reductase (323 aa).

Residues 23 to 24 (TY) and D50 each bind NADP(+). Y24 contributes to the substrate binding site. Residue Y55 is the Proton donor of the active site. H117 is a binding site for substrate. NADP(+) contacts are provided by residues 166–167 (SN), Q190, 216–221 (YSALGS), and 270–280 (KSFTEKRIKEN).

The protein belongs to the aldo/keto reductase family.

Its subcellular location is the cytoplasm. The catalysed reaction is prostaglandin F2alpha + NADP(+) = prostaglandin E2 + NADPH + H(+). It carries out the reaction (17R,20S)-17,20-dihydroxypregn-4-en-3-one + NADP(+) = 17alpha-hydroxyprogesterone + NADPH + H(+). It catalyses the reaction (17R,20S)-17,20-dihydroxypregn-4-en-3-one + NAD(+) = 17alpha-hydroxyprogesterone + NADH + H(+). Functionally, can convert prostaglandin E2 to prostaglandin F2-alpha. This is Prostaglandin-E(2) 9-reductase (AKR1C5) from Oryctolagus cuniculus (Rabbit).